Reading from the N-terminus, the 210-residue chain is Translation initiation factor IF-3 (210 aa).

The tract at residues 169 to 210 (APKQAPAPKKERTEESAEKAGSAGETEPVPAASAAAEAPANV) is disordered. Residues 176-186 (PKKERTEESAE) are compositionally biased toward basic and acidic residues. Positions 187 to 210 (KAGSAGETEPVPAASAAAEAPANV) are enriched in low complexity.

This sequence belongs to the IF-3 family. In terms of assembly, monomer.

Its subcellular location is the cytoplasm. Functionally, IF-3 binds to the 30S ribosomal subunit and shifts the equilibrium between 70S ribosomes and their 50S and 30S subunits in favor of the free subunits, thus enhancing the availability of 30S subunits on which protein synthesis initiation begins. This chain is Translation initiation factor IF-3, found in Deinococcus deserti (strain DSM 17065 / CIP 109153 / LMG 22923 / VCD115).